We begin with the raw amino-acid sequence, 98 residues long: NADH-ubiquinone oxidoreductase chain 4L (98 aa).

Transmembrane regions (helical) follow at residues 1-21 (MSLTYFNVMLAFTMSFLGLLM), 30-50 (LLCLEGLMLSLFVLVTITILI), and 61-81 (IILLVFAACEAALGLSLLVAV).

It belongs to the complex I subunit 4L family. As to quaternary structure, core subunit of respiratory chain NADH dehydrogenase (Complex I) which is composed of 45 different subunits.

It is found in the mitochondrion inner membrane. It catalyses the reaction a ubiquinone + NADH + 5 H(+)(in) = a ubiquinol + NAD(+) + 4 H(+)(out). Its function is as follows. Core subunit of the mitochondrial membrane respiratory chain NADH dehydrogenase (Complex I) which catalyzes electron transfer from NADH through the respiratory chain, using ubiquinone as an electron acceptor. Part of the enzyme membrane arm which is embedded in the lipid bilayer and involved in proton translocation. This Pipistrellus abramus (Japanese pipistrelle) protein is NADH-ubiquinone oxidoreductase chain 4L (MT-ND4L).